A 451-amino-acid chain; its full sequence is Phosphoglucosamine mutase (451 aa).

Ser107 serves as the catalytic Phosphoserine intermediate. Residues Ser107, Asp246, Asp248, and Asp250 each coordinate Mg(2+). Ser107 is modified (phosphoserine).

Belongs to the phosphohexose mutase family. It depends on Mg(2+) as a cofactor. Activated by phosphorylation.

The enzyme catalyses alpha-D-glucosamine 1-phosphate = D-glucosamine 6-phosphate. In terms of biological role, catalyzes the conversion of glucosamine-6-phosphate to glucosamine-1-phosphate. In Burkholderia lata (strain ATCC 17760 / DSM 23089 / LMG 22485 / NCIMB 9086 / R18194 / 383), this protein is Phosphoglucosamine mutase.